We begin with the raw amino-acid sequence, 170 residues long: NAD(P)H-quinone oxidoreductase subunit I, chloroplastic (170 aa).

4Fe-4S ferredoxin-type domains lie at 55–84 and 95–124; these read GRIH…VDWK and LNYS…MTEE. 8 residues coordinate [4Fe-4S] cluster: C64, C67, C70, C74, C104, C107, C110, and C114.

This sequence belongs to the complex I 23 kDa subunit family. As to quaternary structure, NDH is composed of at least 16 different subunits, 5 of which are encoded in the nucleus. [4Fe-4S] cluster serves as cofactor.

It localises to the plastid. Its subcellular location is the chloroplast thylakoid membrane. The enzyme catalyses a plastoquinone + NADH + (n+1) H(+)(in) = a plastoquinol + NAD(+) + n H(+)(out). It carries out the reaction a plastoquinone + NADPH + (n+1) H(+)(in) = a plastoquinol + NADP(+) + n H(+)(out). In terms of biological role, NDH shuttles electrons from NAD(P)H:plastoquinone, via FMN and iron-sulfur (Fe-S) centers, to quinones in the photosynthetic chain and possibly in a chloroplast respiratory chain. The immediate electron acceptor for the enzyme in this species is believed to be plastoquinone. Couples the redox reaction to proton translocation, and thus conserves the redox energy in a proton gradient. The sequence is that of NAD(P)H-quinone oxidoreductase subunit I, chloroplastic from Spinacia oleracea (Spinach).